Reading from the N-terminus, the 444-residue chain is Glutamyl-tRNA reductase (444 aa).

Substrate is bound by residues 49-52, Ser109, 114-116, and Gln120; these read TCNR and ETQ. Cys50 functions as the Nucleophile in the catalytic mechanism. Residue 189-194 coordinates NADP(+); it reads GAGKMG.

The protein belongs to the glutamyl-tRNA reductase family. Homodimer.

It catalyses the reaction (S)-4-amino-5-oxopentanoate + tRNA(Glu) + NADP(+) = L-glutamyl-tRNA(Glu) + NADPH + H(+). It participates in porphyrin-containing compound metabolism; protoporphyrin-IX biosynthesis; 5-aminolevulinate from L-glutamyl-tRNA(Glu): step 1/2. Its function is as follows. Catalyzes the NADPH-dependent reduction of glutamyl-tRNA(Glu) to glutamate 1-semialdehyde (GSA). The chain is Glutamyl-tRNA reductase from Bacillus cereus (strain AH187).